A 201-amino-acid polypeptide reads, in one-letter code: Small ribosomal subunit protein uS4c (201 aa).

The region spanning 89 to 152 (MRLDNILFRL…NSRTLVQNLI (64 aa)) is the S4 RNA-binding domain.

This sequence belongs to the universal ribosomal protein uS4 family. In terms of assembly, part of the 30S ribosomal subunit. Contacts protein S5. The interaction surface between S4 and S5 is involved in control of translational fidelity.

Its subcellular location is the plastid. The protein localises to the chloroplast. Functionally, one of the primary rRNA binding proteins, it binds directly to 16S rRNA where it nucleates assembly of the body of the 30S subunit. Its function is as follows. With S5 and S12 plays an important role in translational accuracy. In Crucihimalaya wallichii (Rock-cress), this protein is Small ribosomal subunit protein uS4c (rps4).